A 250-amino-acid chain; its full sequence is 3-deoxy-manno-octulosonate cytidylyltransferase (250 aa).

This sequence belongs to the KdsB family.

Its subcellular location is the cytoplasm. It carries out the reaction 3-deoxy-alpha-D-manno-oct-2-ulosonate + CTP = CMP-3-deoxy-beta-D-manno-octulosonate + diphosphate. Its pathway is nucleotide-sugar biosynthesis; CMP-3-deoxy-D-manno-octulosonate biosynthesis; CMP-3-deoxy-D-manno-octulosonate from 3-deoxy-D-manno-octulosonate and CTP: step 1/1. It functions in the pathway bacterial outer membrane biogenesis; lipopolysaccharide biosynthesis. In terms of biological role, activates KDO (a required 8-carbon sugar) for incorporation into bacterial lipopolysaccharide in Gram-negative bacteria. The polypeptide is 3-deoxy-manno-octulosonate cytidylyltransferase (Francisella philomiragia subsp. philomiragia (strain ATCC 25017 / CCUG 19701 / FSC 153 / O#319-036)).